The chain runs to 284 residues: MEMO1 family protein LS215_2219 (284 aa).

It belongs to the MEMO1 family.

In Saccharolobus islandicus (strain L.S.2.15 / Lassen #1) (Sulfolobus islandicus), this protein is MEMO1 family protein LS215_2219.